A 706-amino-acid polypeptide reads, in one-letter code: F-box/WD repeat-containing protein 7 (706 aa).

The tract at residues Met1–Ser157 is disordered. A Phosphoserine modification is found at Ser26. Residues Gln32–Arg54 are compositionally biased toward basic and acidic residues. The span at Asn69–Phe83 shows a compositional bias: polar residues. Residues Val86 to Asp128 show a composition bias toward acidic residues. Over residues Asp129–His138 the composition is skewed to basic and acidic residues. Residue Thr204 is modified to Phosphothreonine. A Phosphoserine modification is found at Ser226. The F-box domain maps to Arg277 to Lys323. 7 WD repeats span residues Gly377–Val417, His419–Thr455, Gly458–Met497, His499–Thr535, Gly538–Thr577, His579–Gln617, and Lys621–Asn658.

As to quaternary structure, homodimer; homodimerization plays a role in substrate binding and/or ubiquitination and degradation. Component of the SCF(FBXW7) complex consisting of CUL1, RBX1, SKP1 and FBXW7. Interacts (via F-box domain) with SKP1. Interacts (via F-box domain) with pseudophosphatase STYX; the interaction is direct and prevents FBXW7 interaction with SKP1. Interacts with cyclin-E (CCNE1 or CCNE2). Interacts with PSEN1. Forms a trimeric complex with NOTCH1 and SGK1. Interacts with NOTCH1 intracellular domain/NICD and NOTCH4 intracellular domain/NICD. Interacts with NOTCH2 intracellular domain (N2ICD). Interacts with MYC (when phosphorylated). Interacts with USP28, counteracting ubiquitination of MYC. Interacts with JUN. Found in a complex with JUN and PRR7. Interacts with JUN and PRR7; the interaction inhibits ubiquitination-mediated JUN degradation, promoting its phosphorylation and transcriptional activity. Interacts (when phosphorylated at Thr-204) with PIN1, disrupting FBXW7 dimerization and promoting FBXW7 autoubiquitination and degradation. Interacts with UBE2QL1. Interacts with FAM83D; promotes FBXW7 degradation. Interacts with MYCN; FBXW7 competes with AURKA for binding to unphosphorylated MYCN but not for binding to phosphorylated MYCN. Interacts with STOML1. Interacts with NFE2L1. Interacts with USP36, counteracting ubiquitination of MYC. Interacts with RICTOR; mediates RICTOR ubiquitination and degradation.l Interacts with USP38, counteracting ubiquitination of MYC. (Microbial infection) In case of infection, interacts with T.annulata PIN1 (TaPIN1); leading to FBXW7 autoubiquitination and subsequent degradation: FBXW7 degradation promotes stabilization of JUN, which promotes cell transformation. In terms of processing, phosphorylation at Thr-204 promotes interaction with PIN1, leading to disrupt FBXW7 dimerization and promoting FBXW7 autoubiquitination and degradation. Phosphorylated by ATM at Ser-26 in response to DNA damage, promoting recruitment to DNA damage sites and 'Lys-63'-linked ubiquitination of phosphorylated XRCC4. Ubiquitinated: autoubiquitinates following phosphorylation at Thr-204 and subsequent interaction with PIN1. Ubiquitination leads to its degradation.

The protein localises to the nucleus. It localises to the nucleoplasm. Its subcellular location is the chromosome. Its pathway is protein modification; protein ubiquitination. Substrate recognition component of a SCF (SKP1-CUL1-F-box protein) E3 ubiquitin-protein ligase complex which mediates the ubiquitination and subsequent proteasomal degradation of target proteins. Recognizes and binds phosphorylated sites/phosphodegrons within target proteins and thereafter brings them to the SCF complex for ubiquitination. Identified substrates include cyclin-E (CCNE1 or CCNE2), DISC1, JUN, MYC, NOTCH1 released notch intracellular domain (NICD), NOTCH2, MCL1, MLST8, RICTOR, and probably PSEN1. Acts as a negative regulator of JNK signaling by binding to phosphorylated JUN and promoting its ubiquitination and subsequent degradation. SCF(FBXW7) complex mediates the ubiquitination and subsequent degradation of NFE2L1. Involved in bone homeostasis and negative regulation of osteoclast differentiation. Also able to promote 'Lys-63'-linked ubiquitination in response to DNA damage. The SCF(FBXW7) complex facilitates double-strand break repair following phosphorylation by ATM: phosphorylation promotes localization to sites of double-strand breaks and 'Lys-63'-linked ubiquitination of phosphorylated XRCC4, enhancing DNA non-homologous end joining. The chain is F-box/WD repeat-containing protein 7 from Bos taurus (Bovine).